The sequence spans 680 residues: E3 ubiquitin-protein ligase Midline-1 (680 aa).

An RING-type zinc finger spans residues 10–60 (CPICLELFEDPLLLPCAHSLCFNCAHRILVSHCATNEPVESINAFQCPTCR). Phosphoserine is present on residues S92 and S96. 2 consecutive B box-type zinc fingers follow at residues 116–165 (KVLC…IEPI) and 172–212 (GLMC…VAAL). The Zn(2+) site is built by C119, C122, C134, C137, C142, C145, H150, H159, C175, H178, C198, and H204. The stretch at 205–264 (RDHQVAALSERYDKLKQNLESNLTNLIKRNTELETLLAKLIQTCQHVEVNASRQEAKLTE) forms a coiled coil. Residues 320–379 (LKENDHARFLQTAKNITERVSMATASSQVLIPEINLNDTFDTFALDFSREKKLLECLDYL) enclose the COS domain. The region spanning 384 to 494 (PPAIREELCT…RSSEPGKLKT (111 aa)) is the Fibronectin type-III domain. The segment covering 484 to 498 (SRSSEPGKLKTNSQP) has biased composition (polar residues). 2 disordered regions span residues 484–503 (SRSSEPGKLKTNSQPFRLDP) and 516–535 (NLTVERDESSSKKSHAPERF). In terms of domain architecture, B30.2/SPRY spans 495-672 (NSQPFRLDPK…IVTGLPIPDH (178 aa)). The span at 516–533 (NLTVERDESSSKKSHAPE) shows a compositional bias: basic and acidic residues. The residue at position 524 (S524) is a Phosphoserine.

The protein belongs to the TRIM/RBCC family. Homodimer or heterodimer with MID2. Interacts with IGBP1. In terms of processing, phosphorylated. As to expression, ubiquitously expressed in fetus and adult. At 9 dpc-10.5 dpc, highest expression found in frontonasal processes, branchial arches and CNS. From 12.5 dpc to 16.5 dpc, high levels found in rostral part of CNS. At 14.5 dpc, begins to be highly expressed in kidney and lung. At 16.5 dpc, highly expressed in the mucosa of the hindgut and cutaneous region of the stomach.

It localises to the cytoplasm. The protein resides in the cytoskeleton. It catalyses the reaction S-ubiquitinyl-[E2 ubiquitin-conjugating enzyme]-L-cysteine + [acceptor protein]-L-lysine = [E2 ubiquitin-conjugating enzyme]-L-cysteine + N(6)-ubiquitinyl-[acceptor protein]-L-lysine.. Its function is as follows. Has E3 ubiquitin ligase activity towards IGBP1, promoting its monoubiquitination, which results in deprotection of the catalytic subunit of protein phosphatase PP2A, and its subsequent degradation by polyubiquitination. The protein is E3 ubiquitin-protein ligase Midline-1 (Mid1) of Mus musculus (Mouse).